The primary structure comprises 327 residues: Eukaryotic translation initiation factor 3 subunit I (327 aa).

WD repeat units follow at residues 8 to 49, 51 to 89, 188 to 227, 229 to 268, and 285 to 324; these read GHER…GSYD, HNGAVWDIDVSWDTTKCVTASGDLTVKIWDAELGNCLYT, VHRYSVQDLQLSPRGDFLISASRDKTAALLDVNDLKKLKQ, KSERPVNSACISPNRDHICLGGGEDAMQVTQTSVSAGHFE, and GHFGPINTMAWHPSGTIIATGGEDGYIRIQEFDEDYLGFT.

This sequence belongs to the eIF-3 subunit I family. As to quaternary structure, component of the eukaryotic translation initiation factor 3 (eIF-3) complex.

It is found in the cytoplasm. Component of the eukaryotic translation initiation factor 3 (eIF-3) complex, which is involved in protein synthesis of a specialized repertoire of mRNAs and, together with other initiation factors, stimulates binding of mRNA and methionyl-tRNAi to the 40S ribosome. The eIF-3 complex specifically targets and initiates translation of a subset of mRNAs involved in cell proliferation. This is Eukaryotic translation initiation factor 3 subunit I from Caenorhabditis elegans.